Here is a 269-residue protein sequence, read N- to C-terminus: Enoyl-[acyl-carrier-protein] reductase [NADH] (269 aa).

NAD(+)-binding positions include 20–21, 64–65, and 95–96; these read SI, DV, and IG. Residue Y158 coordinates substrate. Residues K165 and I194 each contribute to the NAD(+) site.

The protein belongs to the short-chain dehydrogenases/reductases (SDR) family. FabI subfamily. Homodimer. Homotetramer.

The catalysed reaction is a 2,3-saturated acyl-[ACP] + NAD(+) = a (2E)-enoyl-[ACP] + NADH + H(+). The enzyme catalyses a 2,3-saturated acyl-CoA + NAD(+) = a (2E)-enoyl-CoA + NADH + H(+). The protein operates within lipid metabolism; mycolic acid biosynthesis. Functionally, enoyl-ACP reductase of the type II fatty acid syntase (FAS-II) system, which is involved in the biosynthesis of mycolic acids, a major component of mycobacterial cell walls. Catalyzes the NADH-dependent reduction of the double bond of 2-trans-enoyl-[acyl-carrier protein], an essential step in the fatty acid elongation cycle of the FAS-II pathway. Shows preference for long-chain fatty acyl thioester substrates, and can also use 2-trans-enoyl-CoAs as alternative substrates. The mycobacterial FAS-II system utilizes the products of the FAS-I system as primers to extend fatty acyl chain lengths up to C56, forming the meromycolate chain that serves as the precursor for final mycolic acids. Its function is as follows. Is the primary target of the first-line antitubercular drug isoniazid (INH) and of the second-line drug ethionamide (ETH). Overexpressed inhA confers INH and ETH resistance to M.bovis. The mechanism of isoniazid action against InhA is covalent attachment of the activated form of the drug to the nicotinamide ring of NAD and binding of the INH-NAD adduct to the active site of InhA. Similarly, the ETH-NAD adduct binds InhA. In Mycobacterium bovis (strain ATCC BAA-935 / AF2122/97), this protein is Enoyl-[acyl-carrier-protein] reductase [NADH].